The following is a 415-amino-acid chain: Mulatexin (415 aa).

The first 21 residues, 1–21, serve as a signal peptide directing secretion; it reads MKFRTLLIIFSLVFLLEIVSA. One can recognise a Chitin-binding type-1 1 domain in the interval 23–66; sequence EPQCGRDAGGALCHGNLCCSHWGFCGTTAIYCDVDQGCQSQCWS. 4 disulfides stabilise this stretch: Cys-26–Cys-41, Cys-35–Cys-47, Cys-40–Cys-54, and Cys-60–Cys-64. A disordered region spans residues 65–127; it reads WSSPPPPSPP…PGGPERPDHR (63 aa). Residues 67–121 are compositionally biased toward pro residues; that stretch reads SPPPPSPPPPPPSPPPPSPPPPSPPPPSPPPPSPPPPSPPPPSPPPPSPPPPGGP. One can recognise a Chitin-binding type-1 2 domain in the interval 125–167; the sequence is DHRCGRALGNPPCNPGRCCSIHNWCGSTAAYCRGSSCQYQCWN. 4 disulfide bridges follow: Cys-128–Cys-143, Cys-137–Cys-149, Cys-142–Cys-156, and Cys-161–Cys-165. The N-linked (GlcNAc...) asparagine glycan is linked to Asn-264.

In terms of processing, glycosylated.

It localises to the secreted. Its function is as follows. Chitin-binding protein which slows larval growth when consumed by the lepidopteran species S.ricini and M.brassica, but not when consumed by the mulberry specialist B.mori. Lacks chitinase activity. In Morus alba (White mulberry), this protein is Mulatexin.